An 842-amino-acid polypeptide reads, in one-letter code: Outer membrane usher protein LpfC (842 aa).

The signal sequence occupies residues methionine 1–alanine 21. The cysteines at positions 819 and 841 are disulfide-linked.

The protein belongs to the fimbrial export usher family.

The protein localises to the cell outer membrane. Its function is as follows. Involved in the export and assembly of LpfA fimbrial subunits across the outer membrane. This is Outer membrane usher protein LpfC (lpfC) from Salmonella typhimurium (strain LT2 / SGSC1412 / ATCC 700720).